The sequence spans 177 residues: Large ribosomal subunit protein uL6 (177 aa).

It belongs to the universal ribosomal protein uL6 family. Part of the 50S ribosomal subunit.

Its function is as follows. This protein binds to the 23S rRNA, and is important in its secondary structure. It is located near the subunit interface in the base of the L7/L12 stalk, and near the tRNA binding site of the peptidyltransferase center. In Dichelobacter nodosus (strain VCS1703A), this protein is Large ribosomal subunit protein uL6.